Consider the following 183-residue polypeptide: Crossover junction endodeoxyribonuclease RuvC (183 aa).

Catalysis depends on residues D7, E66, and D138. Residues D7, E66, and D138 each coordinate Mg(2+).

The protein belongs to the RuvC family. Homodimer which binds Holliday junction (HJ) DNA. The HJ becomes 2-fold symmetrical on binding to RuvC with unstacked arms; it has a different conformation from HJ DNA in complex with RuvA. In the full resolvosome a probable DNA-RuvA(4)-RuvB(12)-RuvC(2) complex forms which resolves the HJ. The cofactor is Mg(2+).

The protein localises to the cytoplasm. The catalysed reaction is Endonucleolytic cleavage at a junction such as a reciprocal single-stranded crossover between two homologous DNA duplexes (Holliday junction).. The RuvA-RuvB-RuvC complex processes Holliday junction (HJ) DNA during genetic recombination and DNA repair. Endonuclease that resolves HJ intermediates. Cleaves cruciform DNA by making single-stranded nicks across the HJ at symmetrical positions within the homologous arms, yielding a 5'-phosphate and a 3'-hydroxyl group; requires a central core of homology in the junction. The consensus cleavage sequence is 5'-(A/T)TT(C/G)-3'. Cleavage occurs on the 3'-side of the TT dinucleotide at the point of strand exchange. HJ branch migration catalyzed by RuvA-RuvB allows RuvC to scan DNA until it finds its consensus sequence, where it cleaves and resolves the cruciform DNA. The chain is Crossover junction endodeoxyribonuclease RuvC from Burkholderia ambifaria (strain ATCC BAA-244 / DSM 16087 / CCUG 44356 / LMG 19182 / AMMD) (Burkholderia cepacia (strain AMMD)).